We begin with the raw amino-acid sequence, 155 residues long: MFSMIRGPRAAFGTLIGQWRRGMMTTGNRRLCIKPQEGPSASPQTQRPGFKLPGYRPSDWDKKMLMWSGRFKTVEQIPEFVSFEMIDAARNRVRVKACYIMMGLTIFACLVMIVSGKKAVSRKESLIAINMEKKAKWREDAQREKEENALDAKAQ.

The chain crosses the membrane as a helical span at residues 95–114 (VKACYIMMGLTIFACLVMIV).

Belongs to the UPF0389 family.

The protein resides in the membrane. In Danio rerio (Zebrafish), this protein is Protein FAM162B (fam162b).